A 570-amino-acid polypeptide reads, in one-letter code: Sulfite reductase [NADPH] hemoprotein beta-component (570 aa).

[4Fe-4S] cluster is bound by residues cysteine 434, cysteine 440, cysteine 479, and cysteine 483. Cysteine 483 contributes to the siroheme binding site.

It belongs to the nitrite and sulfite reductase 4Fe-4S domain family. As to quaternary structure, alpha(8)-beta(8). The alpha component is a flavoprotein, the beta component is a hemoprotein. Siroheme serves as cofactor. Requires [4Fe-4S] cluster as cofactor.

The catalysed reaction is hydrogen sulfide + 3 NADP(+) + 3 H2O = sulfite + 3 NADPH + 4 H(+). The protein operates within sulfur metabolism; hydrogen sulfide biosynthesis; hydrogen sulfide from sulfite (NADPH route): step 1/1. Component of the sulfite reductase complex that catalyzes the 6-electron reduction of sulfite to sulfide. This is one of several activities required for the biosynthesis of L-cysteine from sulfate. In Escherichia coli (strain K12), this protein is Sulfite reductase [NADPH] hemoprotein beta-component (cysI).